The chain runs to 447 residues: Tubulin beta chain (447 aa).

GTP is bound by residues glutamine 11, glutamate 69, serine 138, glycine 142, threonine 143, glycine 144, asparagine 204, and asparagine 226. Glutamate 69 contributes to the Mg(2+) binding site. The segment at glutamine 424–glutamate 447 is disordered. The span at glutamate 432–glutamate 447 shows a compositional bias: acidic residues.

The protein belongs to the tubulin family. As to quaternary structure, dimer of alpha and beta chains. A typical microtubule is a hollow water-filled tube with an outer diameter of 25 nm and an inner diameter of 15 nM. Alpha-beta heterodimers associate head-to-tail to form protofilaments running lengthwise along the microtubule wall with the beta-tubulin subunit facing the microtubule plus end conferring a structural polarity. Microtubules usually have 13 protofilaments but different protofilament numbers can be found in some organisms and specialized cells. Mg(2+) serves as cofactor.

It localises to the cytoplasm. The protein resides in the cytoskeleton. Functionally, tubulin is the major constituent of microtubules, a cylinder consisting of laterally associated linear protofilaments composed of alpha- and beta-tubulin heterodimers. Microtubules grow by the addition of GTP-tubulin dimers to the microtubule end, where a stabilizing cap forms. Below the cap, tubulin dimers are in GDP-bound state, owing to GTPase activity of alpha-tubulin. The polypeptide is Tubulin beta chain (TUB1) (Dothistroma septosporum (Red band needle blight fungus)).